Consider the following 342-residue polypeptide: RNA 3'-terminal phosphate cyclase (342 aa).

ATP is bound by residues glutamine 103 and 283-287; that span reads YLADQ. Histidine 308 (tele-AMP-histidine intermediate) is an active-site residue.

It belongs to the RNA 3'-terminal cyclase family. Type 1 subfamily.

It is found in the cytoplasm. It carries out the reaction a 3'-end 3'-phospho-ribonucleotide-RNA + ATP = a 3'-end 2',3'-cyclophospho-ribonucleotide-RNA + AMP + diphosphate. Functionally, catalyzes the conversion of 3'-phosphate to a 2',3'-cyclic phosphodiester at the end of RNA. The mechanism of action of the enzyme occurs in 3 steps: (A) adenylation of the enzyme by ATP; (B) transfer of adenylate to an RNA-N3'P to produce RNA-N3'PP5'A; (C) and attack of the adjacent 2'-hydroxyl on the 3'-phosphorus in the diester linkage to produce the cyclic end product. The biological role of this enzyme is unknown but it is likely to function in some aspects of cellular RNA processing. This is RNA 3'-terminal phosphate cyclase (rtcA) from Escherichia coli O157:H7.